Consider the following 424-residue polypeptide: Inhibin beta A chain (424 aa).

The signal sequence occupies residues 1–20 (MPLLWKRGFLLVICWIIVRS). Positions 21-308 (SPTPGSEGHS…EDRQHRRRER (288 aa)) are excised as a propeptide. N165 carries N-linked (GlcNAc...) asparagine glycosylation. Disordered regions lie at residues 178–200 (QQRQPKGNSEAAEDMEDMGLKGE) and 260–288 (KKKKEDDGEGKEKDGGELTGEEEKEQSHR). Residues 263-275 (KEDDGEGKEKDGG) are compositionally biased toward basic and acidic residues. 4 disulfides stabilise this stretch: C312–C320, C319–C389, C348–C421, and C352–C423.

Belongs to the TGF-beta family. Dimeric, linked by one or more disulfide bonds. Inhibin A is a dimer of alpha and beta-A. Inhibin B is a dimer of alpha and beta-B. Activin A is a homodimer of beta-A. Activin B is a homodimer of beta-B. Activin AB is a dimer of beta-A and beta-B. Ciliary ganglion neurons. Levels are higher in the choroid than the iris.

The protein resides in the secreted. Functionally, inhibins and activins inhibit and activate, respectively, the secretion of follitropin by the pituitary gland. Inhibins/activins are involved in regulating a number of diverse functions such as hypothalamic and pituitary hormone secretion, gonadal hormone secretion, germ cell development and maturation, erythroid differentiation, insulin secretion, nerve cell survival, embryonic axial development or bone growth, depending on their subunit composition. Inhibins appear to oppose the functions of activins. Induces somatostatin in the ciliary ganglion neurons and may play a role in regulating neurotransmitter phenotype. The chain is Inhibin beta A chain (INHBA) from Gallus gallus (Chicken).